Reading from the N-terminus, the 662-residue chain is Tubulin--tyrosine ligase-like protein 12 (662 aa).

Residues 324–660 enclose the TTL domain; it reads LKKRKIKVYA…LDEIDPTKVT (337 aa). ATP is bound by residues 472 to 475, Lys-491, and Asp-493; that span reads CEYI.

Belongs to the tubulin--tyrosine ligase family.

Regulates microtubule dynamics in uterine muscle cells. This Caenorhabditis elegans protein is Tubulin--tyrosine ligase-like protein 12.